The primary structure comprises 364 residues: Isopentenyl-diphosphate delta-isomerase (364 aa).

The segment covering M1–L13 has biased composition (basic and acidic residues). Positions M1 to R24 are disordered. R6–K7 is a binding site for substrate. FMN-binding positions include A64 to T66, S94, and N123. Residue S94–H96 participates in substrate binding. Substrate is bound at residue Q153. Mg(2+) is bound at residue E154. FMN-binding positions include K185, S210, T215, G259–R261, and S280–G281.

This sequence belongs to the IPP isomerase type 2 family. Homooctamer. Dimer of tetramers. It depends on FMN as a cofactor. Requires NADPH as cofactor. Mg(2+) is required as a cofactor.

Its subcellular location is the cytoplasm. It carries out the reaction isopentenyl diphosphate = dimethylallyl diphosphate. Involved in the biosynthesis of isoprenoids. Catalyzes the 1,3-allylic rearrangement of the homoallylic substrate isopentenyl (IPP) to its allylic isomer, dimethylallyl diphosphate (DMAPP). The sequence is that of Isopentenyl-diphosphate delta-isomerase from Kitasatospora griseola (Streptomyces griseolosporeus).